Here is a 737-residue protein sequence, read N- to C-terminus: Dipeptidyl peptidase 3 (737 aa).

A2 carries the N-acetylalanine modification. Position 450 (H450) interacts with Zn(2+). E451 is an active-site residue. Zn(2+) contacts are provided by H455 and E508.

Belongs to the peptidase M49 family. Zn(2+) is required as a cofactor. As to expression, detected in placenta (at protein level). Detected in erythrocytes (at protein level).

Its subcellular location is the cytoplasm. The protein localises to the cytosol. The enzyme catalyses Release of an N-terminal dipeptide from a peptide comprising four or more residues, with broad specificity. Also acts on dipeptidyl 2-naphthylamides.. Its activity is regulated as follows. Activated by Co(2+). Inhibited by EDTA and o-phenanthroline (in vitro). Functionally, cleaves and degrades bioactive peptides, including angiotensin, Leu-enkephalin and Met-enkephalin. Also cleaves Arg-Arg-beta-naphthylamide (in vitro). The sequence is that of Dipeptidyl peptidase 3 (DPP3) from Homo sapiens (Human).